The chain runs to 666 residues: Endogenous retrovirus group K member 21 Gag polyprotein (666 aa).

Glycine 2 carries N-myristoyl glycine lipidation. Disordered regions lie at residues 165–189 and 217–264; these read GKGP…AGQV and ELQY…GSEL. Residues 232–247 show a composition bias toward pro residues; it reads GMPPAPQGRAPYPQPP. 2 consecutive CCHC-type zinc fingers follow at residues 544–561 and 580–597; these read GKCY…NCPV and DLCP…QCRS. The disordered stretch occupies residues 598 to 641; it reads KFDKNGQPLSGNEQRGQPQAPQQTGAFPIQPFVPQGFQGQQPPL. The segment covering 604 to 622 has biased composition (polar residues); it reads QPLSGNEQRGQPQAPQQTG. A compositionally biased stretch (low complexity) spans 624-640; it reads FPIQPFVPQGFQGQQPP.

It belongs to the beta type-B retroviral Gag protein family. HERV class-II K(HML-2) gag subfamily. In terms of processing, myristoylation is essential for retroviral assembly. Alteration of the glycine residue leads to a block in the budding of particles and an accumulation of Gag inside the cell. Post-translationally, specific enzymatic cleavages may yield mature proteins.

It localises to the cell membrane. Its function is as follows. The products of the Gag polyproteins of infectious retroviruses perform highly complex orchestrated tasks during the assembly, budding, maturation, and infection stages of the viral replication cycle. During viral assembly, the proteins form membrane associations and self-associations that ultimately result in budding of an immature virion from the infected cell. Gag precursors also function during viral assembly to selectively bind and package two plus strands of genomic RNA. Endogenous Gag proteins may have kept, lost or modified their original function during evolution. The sequence is that of Endogenous retrovirus group K member 21 Gag polyprotein (ERVK-21) from Homo sapiens (Human).